A 360-amino-acid chain; its full sequence is Probable cinnamyl alcohol dehydrogenase 1 (360 aa).

Residue Cys47 participates in Zn(2+) binding. Thr49 provides a ligand contact to NADP(+). Zn(2+) is bound by residues His69, Glu70, Cys100, Cys103, Cys106, Cys114, and Cys163. NADP(+) is bound by residues Thr167, 189–194 (GLGGVG), 212–217 (SSSDKK), Thr252, Gly276, and 299–301 (SFI).

It belongs to the zinc-containing alcohol dehydrogenase family. In terms of assembly, homodimer. The cofactor is Zn(2+).

It carries out the reaction (E)-cinnamyl alcohol + NADP(+) = (E)-cinnamaldehyde + NADPH + H(+). The catalysed reaction is (E)-coniferol + NADP(+) = (E)-coniferaldehyde + NADPH + H(+). It catalyses the reaction (E)-sinapyl alcohol + NADP(+) = (E)-sinapaldehyde + NADPH + H(+). The enzyme catalyses (E)-4-coumaroyl alcohol + NADP(+) = (E)-4-coumaraldehyde + NADPH + H(+). It carries out the reaction (E)-caffeyl alcohol + NADP(+) = (E)-caffeyl aldehyde + NADPH + H(+). The protein operates within aromatic compound metabolism; phenylpropanoid biosynthesis. Involved in lignin biosynthesis. Catalyzes the final step specific for the production of lignin monomers. Catalyzes the NADPH-dependent reduction of coniferaldehyde, 5-hydroxyconiferaldehyde, sinapaldehyde, 4-coumaraldehyde and caffeyl aldehyde to their respective alcohols. In Aralia cordata (Udo), this protein is Probable cinnamyl alcohol dehydrogenase 1 (CAD1).